We begin with the raw amino-acid sequence, 555 residues long: Urocanate hydratase (555 aa).

NAD(+) is bound by residues 52–53, glutamine 130, 176–178, glutamate 196, arginine 201, 242–243, 263–267, 273–274, and tyrosine 322; these read GG, GMG, NA, QTSAH, and YL. Residue cysteine 410 is part of the active site. Glycine 492 lines the NAD(+) pocket.

The protein belongs to the urocanase family. Requires NAD(+) as cofactor.

It is found in the cytoplasm. It catalyses the reaction 4-imidazolone-5-propanoate = trans-urocanate + H2O. The protein operates within amino-acid degradation; L-histidine degradation into L-glutamate; N-formimidoyl-L-glutamate from L-histidine: step 2/3. In terms of biological role, catalyzes the conversion of urocanate to 4-imidazolone-5-propionate. This Shewanella sp. (strain W3-18-1) protein is Urocanate hydratase.